The chain runs to 953 residues: Coatomer subunit beta (953 aa).

Threonine 2 bears the N-acetylthreonine mark. 6 HEAT repeats span residues 96–131, 132–168, 240–276, 277–314, 316–353, and 396–433; these read HEMI…KEAE, LLEP…NFEH, SERA…SAPT, AIKA…HPAH, RVLQ…SRNV, and DMAA…RFDN. Lysine 494 is subject to N6-acetyllysine.

As to quaternary structure, oligomeric complex that consists of at least the alpha, beta, beta', gamma, delta, epsilon and zeta subunits. Interacts (via C-terminus) with HIV-1 Nef; the interaction is direct. Interacts with CAPN8 and PRKCE. Interacts with SCYL1. Interacts with COPG1. Interacts with ARF1 (myristoylated); this interaction is required for binding of COPB1 to Golgi membranes. Interacts (via trunk domain) with ARF1 (via switch I region); the interaction is direct. Interacts with KCNK2 (via N-terminus); this interaction increases the channel-mediated whole cell currents and promotes plasma membrane expression of KCNK2. Interacts with anthrax lethal factor (LF); this interaction may facilitate endosomal vesicle membrane translocation of LF and its release from the lumen of endosomal vesicles to external milieu. Interacts with STX17. Interacts with TMEM115. Interacts with TMEM41B.

It localises to the cytoplasm. Its subcellular location is the golgi apparatus membrane. The protein resides in the cytoplasmic vesicle. The protein localises to the COPI-coated vesicle membrane. It is found in the cell membrane. It localises to the endoplasmic reticulum-Golgi intermediate compartment. Its function is as follows. The coatomer is a cytosolic protein complex that binds to dilysine motifs and reversibly associates with Golgi non-clathrin-coated vesicles, which further mediate biosynthetic protein transport from the ER, via the Golgi up to the trans Golgi network. Coatomer complex is required for budding from Golgi membranes, and is essential for the retrograde Golgi-to-ER transport of dilysine-tagged proteins. In mammals, the coatomer can only be recruited by membranes associated to ADP-ribosylation factors (ARFs), which are small GTP-binding proteins; the complex also influences the Golgi structural integrity, as well as the processing, activity, and endocytic recycling of LDL receptors. Plays a functional role in facilitating the transport of kappa-type opioid receptor mRNAs into axons and enhances translation of these proteins. Required for limiting lipid storage in lipid droplets. Involved in lipid homeostasis by regulating the presence of perilipin family members PLIN2 and PLIN3 at the lipid droplet surface and promoting the association of adipocyte surface triglyceride lipase (PNPLA2) with the lipid droplet to mediate lipolysis. Involved in the Golgi disassembly and reassembly processes during cell cycle. Involved in autophagy by playing a role in early endosome function. Plays a role in organellar compartmentalization of secretory compartments including endoplasmic reticulum (ER)-Golgi intermediate compartment (ERGIC), Golgi, trans-Golgi network (TGN) and recycling endosomes, and in biosynthetic transport of CAV1. Promotes degradation of Nef cellular targets CD4 and MHC class I antigens by facilitating their trafficking to degradative compartments. The sequence is that of Coatomer subunit beta (COPB1) from Pongo abelii (Sumatran orangutan).